The sequence spans 151 residues: Ubiquitin-conjugating enzyme E2 2 (151 aa).

In terms of domain architecture, UBC core spans 4 to 150 (AARRRLMRDF…VRETVEKSWE (147 aa)). The Glycyl thioester intermediate role is filled by C88.

Belongs to the ubiquitin-conjugating enzyme family.

Its subcellular location is the cytoplasm. The protein resides in the nucleus. It catalyses the reaction S-ubiquitinyl-[E1 ubiquitin-activating enzyme]-L-cysteine + [E2 ubiquitin-conjugating enzyme]-L-cysteine = [E1 ubiquitin-activating enzyme]-L-cysteine + S-ubiquitinyl-[E2 ubiquitin-conjugating enzyme]-L-cysteine.. The protein operates within protein modification; protein ubiquitination. Functionally, catalyzes the covalent attachment of ubiquitin to other proteins. Plays a role in transcription regulation by catalyzing the monoubiquitination of histone H2B to form H2BK123ub1. H2BK123ub1 gives a specific tag for epigenetic transcriptional activation and is also a prerequisite for H3K4me and H3K79me formation. Also involved in postreplication repair of UV-damaged DNA, in N-end rule-dependent protein degradation and in sporulation. This is Ubiquitin-conjugating enzyme E2 2 (UBC2) from Fusarium solani (Filamentous fungus).